We begin with the raw amino-acid sequence, 181 residues long: Inorganic pyrophosphatase 2 (181 aa).

Substrate contacts are provided by K30, R44, and Y56. Positions 66, 71, and 103 each coordinate Mg(2+). Y142 is a binding site for substrate.

Belongs to the PPase family. As to quaternary structure, homohexamer. It depends on Mg(2+) as a cofactor.

The protein resides in the cytoplasm. It carries out the reaction diphosphate + H2O = 2 phosphate + H(+). Catalyzes the hydrolysis of inorganic pyrophosphate (PPi) forming two phosphate ions. The polypeptide is Inorganic pyrophosphatase 2 (Pseudomonas syringae pv. tomato (strain ATCC BAA-871 / DC3000)).